The sequence spans 196 residues: Protein GrpE (196 aa).

A disordered region spans residues 1 to 40 (MSSKEQKTPEGQAPEEIIMDQHEEVEAVEPNDSAEQVDPR).

It belongs to the GrpE family. As to quaternary structure, homodimer.

It localises to the cytoplasm. Its function is as follows. Participates actively in the response to hyperosmotic and heat shock by preventing the aggregation of stress-denatured proteins, in association with DnaK and GrpE. It is the nucleotide exchange factor for DnaK and may function as a thermosensor. Unfolded proteins bind initially to DnaJ; upon interaction with the DnaJ-bound protein, DnaK hydrolyzes its bound ATP, resulting in the formation of a stable complex. GrpE releases ADP from DnaK; ATP binding to DnaK triggers the release of the substrate protein, thus completing the reaction cycle. Several rounds of ATP-dependent interactions between DnaJ, DnaK and GrpE are required for fully efficient folding. This Salmonella gallinarum (strain 287/91 / NCTC 13346) protein is Protein GrpE.